Reading from the N-terminus, the 271-residue chain is Urease accessory protein UreD (271 aa).

This sequence belongs to the UreD family. In terms of assembly, ureD, UreF and UreG form a complex that acts as a GTP-hydrolysis-dependent molecular chaperone, activating the urease apoprotein by helping to assemble the nickel containing metallocenter of UreC. The UreE protein probably delivers the nickel.

Its subcellular location is the cytoplasm. Its function is as follows. Required for maturation of urease via the functional incorporation of the urease nickel metallocenter. This is Urease accessory protein UreD from Halalkalibacterium halodurans (strain ATCC BAA-125 / DSM 18197 / FERM 7344 / JCM 9153 / C-125) (Bacillus halodurans).